A 201-amino-acid chain; its full sequence is MEAMSFAARSTVLSISKSFPKNNSPTYLTLRPKFSRVRFTTVASQSQGRQQVSENAEDAKKKFSETTDSLKHKTSEATDSASHKANGAARETNDKAKETYNAASGKAGELKDKTQEGAENVREKAMDAGNDAMEKTRNAGERVADGVSNVGQNVKENVMGAGEKVKEFAEDVKDTVMGKSEEVKNQAEHETKKRSTSTNYF.

A compositionally biased stretch (polar residues) spans 41–54 (TVASQSQGRQQVSE). Disordered stretches follow at residues 41–155 (TVAS…QNVK) and 177–201 (MGKS…TNYF). 3 stretches are compositionally biased toward basic and acidic residues: residues 57-76 (EDAK…KTSE), 108-144 (GELK…ERVA), and 177-193 (MGKS…ETKK).

This sequence belongs to the LEA type 1 family.

The chain is Desiccation-related protein PCC3-06 from Craterostigma plantagineum (Blue gem).